A 252-amino-acid polypeptide reads, in one-letter code: MHAEFRTDRGRIRHHNEDNGGVFENKDNQPIVIVADGMGGHRAGDVASEMAVRLLSDAWKETTALLTAEEIETWLRKEIQEVNKQIVLYAESEMDLNGMGTTLVAAIMAKSQVVIANVGDSRGYLLQNNTLRQLTEDHSLVHELLRTGEISKEDAMNHPRKNILLRALGVEGKVEVDTFVVPFQTTDTLLLCSDGLTNMVPETEMEDILKSKRSLSEKADVFITKANSYGGEDNITVLLVERNLMQKGRDAS.

A compositionally biased stretch (basic and acidic residues) spans 1-18 (MHAEFRTDRGRIRHHNED). The interval 1–23 (MHAEFRTDRGRIRHHNEDNGGVF) is disordered. Residues 2-242 (HAEFRTDRGR…DNITVLLVER (241 aa)) enclose the PPM-type phosphatase domain. The Mn(2+) site is built by Asp-36, Gly-37, Asp-194, and Asp-233.

Belongs to the PP2C family. It depends on Mn(2+) as a cofactor.

Its subcellular location is the cytoplasm. The protein localises to the membrane. It catalyses the reaction O-phospho-L-seryl-[protein] + H2O = L-seryl-[protein] + phosphate. The catalysed reaction is O-phospho-L-threonyl-[protein] + H2O = L-threonyl-[protein] + phosphate. Protein phosphatase that dephosphorylates EF-Tu. The polypeptide is Serine/threonine phosphatase stp (stp) (Listeria welshimeri serovar 6b (strain ATCC 35897 / DSM 20650 / CCUG 15529 / CIP 8149 / NCTC 11857 / SLCC 5334 / V8)).